A 370-amino-acid chain; its full sequence is Acyl-CoA:lysophosphatidylglycerol acyltransferase 1 (370 aa).

A helical transmembrane segment spans residues 22–42 (FAFMVVNNLVAIPSYICYVII). An HXXXXD motif motif is present at residues 101-106 (HQATGD). The helical transmembrane segment at 342–362 (LWIFLIQSFAFLSGYMWYNII) threads the bilayer.

The protein belongs to the 1-acyl-sn-glycerol-3-phosphate acyltransferase family. As to expression, highly expressed in liver and placenta. Also expressed in peripheral blood, lung, kidney and brain. Detected at lower levels in colon. High expression is detected in brain and testis.

It is found in the endoplasmic reticulum membrane. It catalyses the reaction a 2-acyl-sn-glycero-3-phosphoethanolamine + octadecanoyl-CoA = 1-octadecanoyl-2-acyl-sn-glycero-3-phosphoethanolamine + CoA. It carries out the reaction 2-(9Z-octadecenoyl)-sn-glycero-3-phosphoethanolamine + octadecanoyl-CoA = 1-octadecanoyl-2-(9Z-octadecenoyl)-sn-glycero-3-phosphoethanolamine + CoA. The catalysed reaction is a 2-acyl-sn-glycero-3-phosphoethanolamine + hexadecanoyl-CoA = 1-hexadecanoyl-2-acyl-sn-glycero-3-phosphoethanolamine + CoA. The enzyme catalyses 2-(9Z-octadecenoyl)-sn-glycero-3-phosphoethanolamine + hexadecanoyl-CoA = 1-hexadecanoyl-2-(9Z-octadecenoyl)-sn-glycero-3-phosphoethanolamine + CoA. It catalyses the reaction 1-tetradecanoyl-sn-glycero-3-phospho-(1'-sn-glycerol) + hexadecanoyl-CoA = 1-tetradecanoyl-2-hexadecanoyl-sn-glycero-3-phospho-(1'-sn-glycerol) + CoA. It carries out the reaction 1-hexadecanoyl-sn-glycero-3-phospho-(1'-sn-glycerol) + dodecanoyl-CoA = 1-hexadecanoyl-2-dodecanoyl-sn-glycero-3-phospho-(1'-sn-glycerol) + CoA. The catalysed reaction is 1-hexadecanoyl-sn-glycero-3-phospho-(1'-sn-glycerol) + hexadecanoyl-CoA = 1,2-dihexadecanoyl-sn-glycero-3-phospho-(1'-sn-glycerol) + CoA. The enzyme catalyses 1-hexadecanoyl-sn-glycero-3-phospho-(1'-sn-glycerol) + octadecanoyl-CoA = 1-hexadecanoyl-2-octadecanoyl-sn-glycero-3-phospho-(1'-sn-glycerol) + CoA. It catalyses the reaction 1-octadecanoyl-sn-glycero-3-phospho-(1'-sn-glycerol) + hexadecanoyl-CoA = 1-octadecanoyl-2-hexadecanoyl-sn-glycero-3-phospho-(1'-sn-glycerol) + CoA. It carries out the reaction 1-(9Z-octadecenoyl)-sn-glycero-3-phospho-(1'-sn-glycerol) + dodecanoyl-CoA = 1-(9Z-octadecenoyl)-2-dodecanoyl-sn-glycero-3-phospho-(1'-sn-glycerol) + CoA. The catalysed reaction is 1-hexadecanoyl-sn-glycero-3-phospho-(1'-sn-glycerol) + (9Z)-octadecenoyl-CoA = 1-hexadecanoyl-2-(9Z-octadecenoyl)-sn-glycero-3-phospho-(1'-sn-glycerol) + CoA. The enzyme catalyses 1-(9Z-octadecenoyl)-sn-glycero-3-phospho-(1'-sn-glycerol) + hexadecanoyl-CoA = 1-(9Z-octadecenoyl)-2-hexadecanoyl-sn-glycero-3-phospho-(1'-sn-glycerol) + CoA. It catalyses the reaction 1-(9Z-octadecenoyl)-sn-glycero-3-phospho-(1'-sn-glycerol) + (9Z)-octadecenoyl-CoA = 1,2-di-(9Z-octadecenoyl)-sn-glycero-3-phospho-(1'-sn-glycerol) + CoA. It carries out the reaction a 2-acylglycerol + an acyl-CoA = a 1,2-diacylglycerol + CoA. The catalysed reaction is a 2-acylglycerol + hexadecanoyl-CoA = a 1-hexadecanoyl-2-acylglycerol + CoA. The enzyme catalyses a 1-acylglycerol + hexadecanoyl-CoA = an hexadecanoyl-acylglycerol + CoA. It catalyses the reaction a 2-acyl-sn-glycero-3-phosphocholine + an acyl-CoA = a 1,2-diacyl-sn-glycero-3-phosphocholine + CoA. It carries out the reaction 2-(9Z-octadecenoyl)-sn-glycero-3-phosphocholine + octadecanoyl-CoA = 1-octadecanoyl-2-(9Z-octadecenoyl)-sn-glycero-3-phosphocholine + CoA. The catalysed reaction is 2-(9Z,12Z-octadecadienoyl)-sn-glycero-3-phosphocholine + octadecanoyl-CoA = 1-octadecanoyl-2-(9Z,12Z)-octadecadienoyl-sn-glycero-3-phosphocholine + CoA. The enzyme catalyses 2-(5Z,8Z,11Z,14Z)-eicosatetraenoyl-sn-glycero-3-phosphocholine + octadecanoyl-CoA = 1-octadecanoyl-2-(5Z,8Z,11Z,14Z-eicosatetraenoyl)-sn-glycero-3-phosphocholine + CoA. It catalyses the reaction 2-(9Z-octadecenoyl)-sn-glycero-3-phosphocholine + hexadecanoyl-CoA = 1-hexadecanoyl-2-(9Z-octadecenoyl)-sn-glycero-3-phosphocholine + CoA. It carries out the reaction 2-(9Z-octadecenoyl)-sn-glycero-3-phospho-L-serine + hexadecanoyl-CoA = 1-hexadecanoyl-2-(9Z-octadecenoyl)-sn-glycero-3-phospho-L-serine + CoA. The catalysed reaction is 2-(4Z,7Z,10Z,13Z,16Z,19Z-docosahexaenoyl)-sn-glycero-3-phosphocholine + octadecanoyl-CoA = 1-octadecanoyl-2-(4Z,7Z,10Z,13Z,16Z,19Z-docosahexaenoyl)-sn-glycero-3-phosphocholine + CoA. The enzyme catalyses 1-(9Z-octadecenoyl)-sn-glycero-3-phospho-L-serine + octadecanoyl-CoA = 1-(9Z-octadecenoyl)-2-octadecanoyl-sn-glycero-3-phospho-L-serine + CoA. It catalyses the reaction a 2-acyl-sn-glycero-3-phosphoethanolamine + a fatty acyl-CoA = a 1,2-diacyl-sn-glycero-3-phosphoethanolamine + CoA. Its function is as follows. Lysophospholipid acyltransferase involved in fatty acyl chain remodeling of glycerophospholipids in the endoplasmic reticulum membrane. Selectively catalyzes the transfer and esterification of saturated long-chain fatty acids from acyl-CoA to the sn-1 position of 1-lyso-2-acyl phosphatidylethanolamines (1-lyso-PE, LPE), with a preference for stearoyl CoA over palmitoyl CoA as acyl donor. Acts in concert with an unknown phospholipase A1 to convert palmitate phosphatidylethanolamine (PE) species into stearate ones. Provides substrates to the PE methylation pathway, controlling stearate/palmitate composition of PE and phosphatidylcholine (PC) species with an overall impact on de novo hepatic lipid synthesis, body fat content and life span. Can acylate lysophosphatidylglycerols (LPG) using various saturated fatty acyl-CoAs as acyl donors. Can also acylate monoacylglycerols with a preference for 2-monoacylglycerols over 1-monoacylglycerols. Has no activity toward lysophosphatidic acids (LPA). In Homo sapiens (Human), this protein is Acyl-CoA:lysophosphatidylglycerol acyltransferase 1.